The primary structure comprises 227 residues: Lipoprotein-releasing system ATP-binding protein LolD (227 aa).

The ABC transporter domain occupies 6–227; it reads LKCENINKFY…MQDGLLKEGA (222 aa). Residue 42–49 participates in ATP binding; the sequence is GSSGSGKS.

This sequence belongs to the ABC transporter superfamily. Lipoprotein translocase (TC 3.A.1.125) family. The complex is composed of two ATP-binding proteins (LolD) and two transmembrane proteins (LolC and LolE).

The protein resides in the cell inner membrane. Its function is as follows. Part of the ABC transporter complex LolCDE involved in the translocation of mature outer membrane-directed lipoproteins, from the inner membrane to the periplasmic chaperone, LolA. Responsible for the formation of the LolA-lipoprotein complex in an ATP-dependent manner. The polypeptide is Lipoprotein-releasing system ATP-binding protein LolD (Haemophilus influenzae (strain 86-028NP)).